We begin with the raw amino-acid sequence, 291 residues long: tRNA dimethylallyltransferase (291 aa).

Residue 17–24 (GPTASGKS) participates in ATP binding. 19–24 (TASGKS) contributes to the substrate binding site.

Belongs to the IPP transferase family. As to quaternary structure, monomer. Requires Mg(2+) as cofactor.

The enzyme catalyses adenosine(37) in tRNA + dimethylallyl diphosphate = N(6)-dimethylallyladenosine(37) in tRNA + diphosphate. Functionally, catalyzes the transfer of a dimethylallyl group onto the adenine at position 37 in tRNAs that read codons beginning with uridine, leading to the formation of N6-(dimethylallyl)adenosine (i(6)A). The protein is tRNA dimethylallyltransferase of Cereibacter sphaeroides (strain ATCC 17025 / ATH 2.4.3) (Rhodobacter sphaeroides).